The following is a 96-amino-acid chain: Cell division topological specificity factor (96 aa).

This sequence belongs to the MinE family.

Prevents the cell division inhibition by proteins MinC and MinD at internal division sites while permitting inhibition at polar sites. This ensures cell division at the proper site by restricting the formation of a division septum at the midpoint of the long axis of the cell. The polypeptide is Cell division topological specificity factor (Nitrosococcus oceani (strain ATCC 19707 / BCRC 17464 / JCM 30415 / NCIMB 11848 / C-107)).